The following is a 159-amino-acid chain: 2-C-methyl-D-erythritol 2,4-cyclodiphosphate synthase (159 aa).

The a divalent metal cation site is built by Asp10 and His12. Residues 10 to 12 and 36 to 37 each bind 4-CDP-2-C-methyl-D-erythritol 2-phosphate; these read DVH and HS. His44 is an a divalent metal cation binding site. 4-CDP-2-C-methyl-D-erythritol 2-phosphate is bound by residues 58–60, 134–137, Phe141, and Arg144; these read DIG and TTTE.

Belongs to the IspF family. In terms of assembly, homotrimer. Requires a divalent metal cation as cofactor.

It catalyses the reaction 4-CDP-2-C-methyl-D-erythritol 2-phosphate = 2-C-methyl-D-erythritol 2,4-cyclic diphosphate + CMP. The protein operates within isoprenoid biosynthesis; isopentenyl diphosphate biosynthesis via DXP pathway; isopentenyl diphosphate from 1-deoxy-D-xylulose 5-phosphate: step 4/6. Its function is as follows. Involved in the biosynthesis of isopentenyl diphosphate (IPP) and dimethylallyl diphosphate (DMAPP), two major building blocks of isoprenoid compounds. Catalyzes the conversion of 4-diphosphocytidyl-2-C-methyl-D-erythritol 2-phosphate (CDP-ME2P) to 2-C-methyl-D-erythritol 2,4-cyclodiphosphate (ME-CPP) with a corresponding release of cytidine 5-monophosphate (CMP). The sequence is that of 2-C-methyl-D-erythritol 2,4-cyclodiphosphate synthase from Bacteroides fragilis (strain YCH46).